Reading from the N-terminus, the 306-residue chain is Foldase protein PrsA (306 aa).

The signal sequence occupies residues 1–20 (MRRKIALFLALIFVGVSLVS). Cysteine 21 carries N-palmitoyl cysteine lipidation. The S-diacylglycerol cysteine moiety is linked to residue cysteine 21. The region spanning 165-255 (FEVMRARHIL…YGYHIIKSEG (91 aa)) is the PpiC domain.

Belongs to the PrsA family.

It is found in the cell membrane. The catalysed reaction is [protein]-peptidylproline (omega=180) = [protein]-peptidylproline (omega=0). Functionally, plays a major role in protein secretion by helping the post-translocational extracellular folding of several secreted proteins. This chain is Foldase protein PrsA, found in Caldanaerobacter subterraneus subsp. tengcongensis (strain DSM 15242 / JCM 11007 / NBRC 100824 / MB4) (Thermoanaerobacter tengcongensis).